The following is a 201-amino-acid chain: Small ribosomal subunit protein uS5 (201 aa).

Residues 1–28 (MAGPQRRGSGAGGGERRDRKGRDGGASA) are disordered. Residues 14-23 (GERRDRKGRD) are compositionally biased toward basic and acidic residues. An S5 DRBM domain is found at 34–97 (YVERVVAINR…EEAKKNFFKV (64 aa)).

The protein belongs to the universal ribosomal protein uS5 family. Part of the 30S ribosomal subunit. Contacts proteins S4 and S8.

In terms of biological role, with S4 and S12 plays an important role in translational accuracy. Located at the back of the 30S subunit body where it stabilizes the conformation of the head with respect to the body. The protein is Small ribosomal subunit protein uS5 of Streptomyces griseus subsp. griseus (strain JCM 4626 / CBS 651.72 / NBRC 13350 / KCC S-0626 / ISP 5235).